A 427-amino-acid polypeptide reads, in one-letter code: Serine hydroxymethyltransferase (427 aa).

(6S)-5,6,7,8-tetrahydrofolate-binding positions include Leu-124 and 128–130; that span reads GHL. At Lys-233 the chain carries N6-(pyridoxal phosphate)lysine.

This sequence belongs to the SHMT family. As to quaternary structure, homodimer. It depends on pyridoxal 5'-phosphate as a cofactor.

The protein resides in the cytoplasm. The enzyme catalyses (6R)-5,10-methylene-5,6,7,8-tetrahydrofolate + glycine + H2O = (6S)-5,6,7,8-tetrahydrofolate + L-serine. Its pathway is one-carbon metabolism; tetrahydrofolate interconversion. It functions in the pathway amino-acid biosynthesis; glycine biosynthesis; glycine from L-serine: step 1/1. Functionally, catalyzes the reversible interconversion of serine and glycine with tetrahydrofolate (THF) serving as the one-carbon carrier. This reaction serves as the major source of one-carbon groups required for the biosynthesis of purines, thymidylate, methionine, and other important biomolecules. Also exhibits THF-independent aldolase activity toward beta-hydroxyamino acids, producing glycine and aldehydes, via a retro-aldol mechanism. The protein is Serine hydroxymethyltransferase of Acidothermus cellulolyticus (strain ATCC 43068 / DSM 8971 / 11B).